Reading from the N-terminus, the 182-residue chain is ATP synthase subunit b, chloroplastic (182 aa).

Residues 36–56 (ILLLLLGLMYVLKEFLGSILV) traverse the membrane as a helical segment.

Belongs to the ATPase B chain family. F-type ATPases have 2 components, F(1) - the catalytic core - and F(0) - the membrane proton channel. F(1) has five subunits: alpha(3), beta(3), gamma(1), delta(1), epsilon(1). F(0) has four main subunits: a(1), b(1), b'(1) and c(10-14). The alpha and beta chains form an alternating ring which encloses part of the gamma chain. F(1) is attached to F(0) by a central stalk formed by the gamma and epsilon chains, while a peripheral stalk is formed by the delta, b and b' chains.

It localises to the plastid. Its subcellular location is the chloroplast thylakoid membrane. Functionally, f(1)F(0) ATP synthase produces ATP from ADP in the presence of a proton or sodium gradient. F-type ATPases consist of two structural domains, F(1) containing the extramembraneous catalytic core and F(0) containing the membrane proton channel, linked together by a central stalk and a peripheral stalk. During catalysis, ATP synthesis in the catalytic domain of F(1) is coupled via a rotary mechanism of the central stalk subunits to proton translocation. Component of the F(0) channel, it forms part of the peripheral stalk, linking F(1) to F(0). This is ATP synthase subunit b, chloroplastic from Gracilaria tenuistipitata var. liui (Red alga).